We begin with the raw amino-acid sequence, 84 residues long: Three-finger toxin 3FTx-1 (84 aa).

The signal sequence occupies residues 1 to 21; that stretch reads MKTLLLTLVVVTIVCLDLGNS. 4 disulfides stabilise this stretch: cysteine 24/cysteine 41, cysteine 34/cysteine 59, cysteine 63/cysteine 71, and cysteine 72/cysteine 77. A glycan (N-linked (GlcNAc...) asparagine) is linked at asparagine 78.

Belongs to the three-finger toxin family. Short-chain subfamily. In terms of tissue distribution, expressed by the venom gland.

The protein localises to the secreted. The protein is Three-finger toxin 3FTx-1 of Micrurus corallinus (Brazilian coral snake).